The chain runs to 932 residues: Glycine dehydrogenase (decarboxylating) (932 aa).

K685 is subject to N6-(pyridoxal phosphate)lysine.

Belongs to the GcvP family. As to quaternary structure, the glycine cleavage system is composed of four proteins: P, T, L and H. Pyridoxal 5'-phosphate is required as a cofactor.

The enzyme catalyses N(6)-[(R)-lipoyl]-L-lysyl-[glycine-cleavage complex H protein] + glycine + H(+) = N(6)-[(R)-S(8)-aminomethyldihydrolipoyl]-L-lysyl-[glycine-cleavage complex H protein] + CO2. The glycine cleavage system catalyzes the degradation of glycine. The P protein binds the alpha-amino group of glycine through its pyridoxal phosphate cofactor; CO(2) is released and the remaining methylamine moiety is then transferred to the lipoamide cofactor of the H protein. This chain is Glycine dehydrogenase (decarboxylating), found in Brucella suis (strain ATCC 23445 / NCTC 10510).